The chain runs to 258 residues: uncharacterized protein (258 aa).

Positions 40-54 (AQKTDTPLDSSSYAV) are enriched in polar residues. The tract at residues 40 to 63 (AQKTDTPLDSSSYAVTSPEEAPNE) is disordered.

This is an uncharacterized protein from Treponema pallidum (strain Nichols).